Consider the following 423-residue polypeptide: MGCFGCSKKSSKRSETNKDTVINRKIVGGTTSVAKSDKRDDQTQPSSDSTKVSPYRDVNNEGGVGKEDQLSLDVKGLNLNDQVTGKKAQTFTFQELAEATGNFRSDCFLGEGGFGKVFKGTIEKLDQVVAIKQLDRNGVQGIREFVVEVLTLSLADHPNLVKLIGFCAEGDQRLLVYEYMPQGSLEDHLHVLPSGKKPLDWNTRMKIAAGAARGLEYLHDRMTPPVIYRDLKCSNILLGEDYQPKLSDFGLAKVGPSGDKTHVSTRVMGTYGYCAPDYAMTGQLTFKSDIYSFGVVLLELITGRKAIDNTKTRKDQNLVGWARPLFKDRRNFPKMVDPLLQGQYPVRGLYQALAISAMCVQEQPTMRPVVSDVVLALNFLASSKYDPNSPSSSSGKNPSFHRDRDDEEKRPHLVKETECEGSS.

The tract at residues 1–66 (MGCFGCSKKS…DVNNEGGVGK (66 aa)) is disordered. G2 is lipidated: N-myristoyl glycine. A lipid anchor (S-palmitoyl cysteine) is attached at C3. Residues 12-22 (KRSETNKDTVI) are compositionally biased toward basic and acidic residues. A compositionally biased stretch (polar residues) spans 43–52 (TQPSSDSTKV). The residue at position 92 (T92) is a Phosphothreonine. A Protein kinase domain is found at 103–380 (FRSDCFLGEG…SDVVLALNFL (278 aa)). Residues 109 to 117 (LGEGGFGKV) and K132 contribute to the ATP site. Residue Y177 is modified to Phosphotyrosine. D230 functions as the Proton acceptor in the catalytic mechanism. S234 and S264 each carry phosphoserine. A phosphothreonine mark is found at T265 and T270. At Y278 the chain carries Phosphotyrosine. The span at 383 to 398 (SKYDPNSPSSSSGKNP) shows a compositional bias: low complexity. A disordered region spans residues 383-423 (SKYDPNSPSSSSGKNPSFHRDRDDEEKRPHLVKETECEGSS). Positions 400–423 (FHRDRDDEEKRPHLVKETECEGSS) are enriched in basic and acidic residues.

The protein belongs to the protein kinase superfamily. Ser/Thr protein kinase family. In terms of processing, palmitoylation at Cys-3 and Cys-6 are required for plasma membrane location.

It localises to the cell membrane. The enzyme catalyses L-seryl-[protein] + ATP = O-phospho-L-seryl-[protein] + ADP + H(+). It carries out the reaction L-threonyl-[protein] + ATP = O-phospho-L-threonyl-[protein] + ADP + H(+). In terms of biological role, may be involved in plant defense signaling. The polypeptide is Probable serine/threonine-protein kinase PBL5 (Arabidopsis thaliana (Mouse-ear cress)).